The sequence spans 730 residues: Dual function macrocyclase-peptidase POPB (730 aa).

Residues serine 577, aspartate 661, and histidine 698 each act as charge relay system in the active site.

Belongs to the peptidase S9A family. As to quaternary structure, monomer. As to expression, expressed in the pileus (cap) and lamellae where it colocalizes with amanitin.

The catalysed reaction is Hydrolysis of Pro-|-Xaa &gt;&gt; Ala-|-Xaa in oligopeptides.. In terms of biological role, dual function macrocyclase-peptidase involved in the biosynthesis of the highly toxic amanitin toxin family of macrocycles. Cleaves peptide bonds on the C-terminal side of prolyl residues. The enzyme first removes 10 residues from the N-terminus of a 35-residue substrate. Conformational trapping of the 25 amino-acid peptide forces the enzyme to release this intermediate rather than proceed to macrocyclization. The enzyme rebinds the 25 amino-acid peptide in a different conformation and catalyzes macrocyclization of the N-terminal eight residues. This is Dual function macrocyclase-peptidase POPB from Amanita bisporigera (Destroying angel).